A 552-amino-acid chain; its full sequence is 5'-AMP-activated protein kinase catalytic subunit alpha-2 (552 aa).

In terms of domain architecture, Protein kinase spans 16 to 268 (YVLGDTLGVG…IKDIREHEWF (253 aa)). Residues 22 to 30 (LGVGTFGKV) and lysine 45 each bind ATP. Residue aspartate 139 is the Proton acceptor of the active site. At threonine 172 the chain carries Phosphothreonine; by LKB1 and CaMKK2. Threonine 258 carries the phosphothreonine modification. The interval 291–376 (EAVKEVCEKF…PERMPPLIAD (86 aa)) is AIS. Serine 377 is modified (phosphoserine). The tract at residues 477 to 521 (VEQRSGSSTPQRSCSAAGLHRPRSSFDSTTAESHSLSGSLTGSLT) is disordered. Residues 480–490 (RSGSSTPQRSC) are compositionally biased toward polar residues. Phosphoserine is present on serine 491. Positions 501 to 510 (SFDSTTAESH) are enriched in polar residues. Positions 511–521 (SLSGSLTGSLT) are enriched in low complexity.

The protein belongs to the protein kinase superfamily. CAMK Ser/Thr protein kinase family. SNF1 subfamily. AMPK is a heterotrimer of an alpha catalytic subunit (PRKAA1 or PRKAA2), a beta (PRKAB1 or PRKAB2) and a gamma non-catalytic subunits (PRKAG1, PRKAG2 or PRKAG3). Interacts with FNIP1 and FNIP2. Interacts with DUSP29. Interacts with ARF6. The phosphorylated form at Thr-172 mediated by CamKK2 interacts with ACSS2. Mg(2+) is required as a cofactor. Post-translationally, ubiquitinated. Phosphorylated at Thr-172 by STK11/LKB1 in complex with STE20-related adapter-alpha (STRADA) pseudo kinase and CAB39. Also phosphorylated at Thr-172 by CAMKK2; triggered by a rise in intracellular calcium ions, without detectable changes in the AMP/ATP ratio. CAMKK1 can also phosphorylate Thr-172, but at much lower level. Dephosphorylated by protein phosphatase 2A and 2C (PP2A and PP2C). Phosphorylated by ULK1; leading to negatively regulate AMPK activity and suggesting the existence of a regulatory feedback loop between ULK1 and AMPK. Dephosphorylated by PPM1A and PPM1B at Thr-172 (mediated by STK11/LKB1).

It localises to the cytoplasm. The protein resides in the nucleus. It catalyses the reaction L-seryl-[protein] + ATP = O-phospho-L-seryl-[protein] + ADP + H(+). The enzyme catalyses L-threonyl-[protein] + ATP = O-phospho-L-threonyl-[protein] + ADP + H(+). The catalysed reaction is L-seryl-[acetyl-CoA carboxylase] + ATP = O-phospho-L-seryl-[acetyl-CoA carboxylase] + ADP + H(+). It carries out the reaction L-seryl-[3-hydroxy-3-methylglutaryl-coenzyme A reductase] + ATP = O-phospho-L-seryl-[3-hydroxy-3-methylglutaryl-coenzyme A reductase] + ADP + H(+). Activated by phosphorylation on Thr-172. Binding of AMP to non-catalytic gamma subunit (PRKAG1, PRKAG2 or PRKAG3) results in allosteric activation, inducing phosphorylation on Thr-172. AMP-binding to gamma subunit also sustains activity by preventing dephosphorylation of Thr-172. ADP also stimulates Thr-172 phosphorylation, without stimulating already phosphorylated AMPK. ATP promotes dephosphorylation of Thr-172, rendering the enzyme inactive. Under physiological conditions AMPK mainly exists in its inactive form in complex with ATP, which is much more abundant than AMP. Selectively inhibited by compound C (6-[4-(2-Piperidin-1-yl-ethoxy)-phenyl)]-3-pyridin-4-yl-pyyrazolo[1,5-a] pyrimidine. Activated by resveratrol, a natural polyphenol present in red wine, and S17834, a synthetic polyphenol. Salicylate/aspirin directly activates kinase activity, primarily by inhibiting Thr-172 dephosphorylation. In terms of biological role, catalytic subunit of AMP-activated protein kinase (AMPK), an energy sensor protein kinase that plays a key role in regulating cellular energy metabolism. In response to reduction of intracellular ATP levels, AMPK activates energy-producing pathways and inhibits energy-consuming processes: inhibits protein, carbohydrate and lipid biosynthesis, as well as cell growth and proliferation. AMPK acts via direct phosphorylation of metabolic enzymes, and by longer-term effects via phosphorylation of transcription regulators. Regulates lipid synthesis by phosphorylating and inactivating lipid metabolic enzymes such as ACACA, ACACB, GYS1, HMGCR and LIPE; regulates fatty acid and cholesterol synthesis by phosphorylating acetyl-CoA carboxylase (ACACA and ACACB) and hormone-sensitive lipase (LIPE) enzymes, respectively. Promotes lipolysis of lipid droplets by mediating phosphorylation of isoform 1 of CHKA (CHKalpha2). Regulates insulin-signaling and glycolysis by phosphorylating IRS1, PFKFB2 and PFKFB3. Involved in insulin receptor/INSR internalization. AMPK stimulates glucose uptake in muscle by increasing the translocation of the glucose transporter SLC2A4/GLUT4 to the plasma membrane, possibly by mediating phosphorylation of TBC1D4/AS160. Regulates transcription and chromatin structure by phosphorylating transcription regulators involved in energy metabolism such as CRTC2/TORC2, FOXO3, histone H2B, HDAC5, MEF2C, MLXIPL/ChREBP, EP300, HNF4A, p53/TP53, SREBF1, SREBF2 and PPARGC1A. Acts as a key regulator of glucose homeostasis in liver by phosphorylating CRTC2/TORC2, leading to CRTC2/TORC2 sequestration in the cytoplasm. In response to stress, phosphorylates 'Ser-36' of histone H2B (H2BS36ph), leading to promote transcription. Acts as a key regulator of cell growth and proliferation by phosphorylating FNIP1, TSC2, RPTOR, WDR24 and ATG1/ULK1: in response to nutrient limitation, negatively regulates the mTORC1 complex by phosphorylating RPTOR component of the mTORC1 complex and by phosphorylating and activating TSC2. Also phosphorylates and inhibits GATOR2 subunit WDR24 in response to nutrient limitation, leading to suppress glucose-mediated mTORC1 activation. In response to energetic stress, phosphorylates FNIP1, inactivating the non-canonical mTORC1 signaling, thereby promoting nuclear translocation of TFEB and TFE3, and inducing transcription of lysosomal or autophagy genes. In response to nutrient limitation, promotes autophagy by phosphorylating and activating ATG1/ULK1. In that process also activates WDR45/WIPI4. Phosphorylates CASP6, thereby preventing its autoprocessing and subsequent activation. AMPK also acts as a regulator of circadian rhythm by mediating phosphorylation of CRY1, leading to destabilize it. May regulate the Wnt signaling pathway by phosphorylating CTNNB1, leading to stabilize it. Also acts as a regulator of cellular polarity by remodeling the actin cytoskeleton; probably by indirectly activating myosin. Also phosphorylates CFTR, EEF2K, KLC1, NOS3 and SLC12A1. Plays an important role in the differential regulation of pro-autophagy (composed of PIK3C3, BECN1, PIK3R4 and UVRAG or ATG14) and non-autophagy (composed of PIK3C3, BECN1 and PIK3R4) complexes, in response to glucose starvation. Can inhibit the non-autophagy complex by phosphorylating PIK3C3 and can activate the pro-autophagy complex by phosphorylating BECN1. Upon glucose starvation, promotes ARF6 activation in a kinase-independent manner leading to cell migration. Upon glucose deprivation mediates the phosphorylation of ACSS2 at 'Ser-659', which exposes the nuclear localization signal of ACSS2, required for its interaction with KPNA1 and nuclear translocation. Upon stress, regulates mitochondrial fragmentation through phosphorylation of MTFR1L. The protein is 5'-AMP-activated protein kinase catalytic subunit alpha-2 (PRKAA2) of Pongo abelii (Sumatran orangutan).